The following is a 156-amino-acid chain: Small ribosomal subunit protein uS7 (156 aa).

This sequence belongs to the universal ribosomal protein uS7 family. Part of the 30S ribosomal subunit. Contacts proteins S9 and S11.

Functionally, one of the primary rRNA binding proteins, it binds directly to 16S rRNA where it nucleates assembly of the head domain of the 30S subunit. Is located at the subunit interface close to the decoding center, probably blocks exit of the E-site tRNA. This is Small ribosomal subunit protein uS7 from Microcystis aeruginosa (strain NIES-843 / IAM M-2473).